We begin with the raw amino-acid sequence, 238 residues long: Ribosomal RNA small subunit methyltransferase G (238 aa).

S-adenosyl-L-methionine is bound by residues Gly77, Phe82, 128–129 (AE), and Arg147. The interval 219-238 (KETPNKYPRKPGTPNKLPIE) is disordered.

The protein belongs to the methyltransferase superfamily. RNA methyltransferase RsmG family.

Its subcellular location is the cytoplasm. In terms of biological role, specifically methylates the N7 position of guanine in position 535 of 16S rRNA. This chain is Ribosomal RNA small subunit methyltransferase G, found in Listeria monocytogenes serovar 1/2a (strain ATCC BAA-679 / EGD-e).